The chain runs to 632 residues: Biosynthetic arginine decarboxylase (632 aa).

At Lys-101 the chain carries N6-(pyridoxal phosphate)lysine. Residue 281 to 291 participates in substrate binding; sequence FDVGGGLGVDY.

Belongs to the Orn/Lys/Arg decarboxylase class-II family. SpeA subfamily. It depends on Mg(2+) as a cofactor. The cofactor is pyridoxal 5'-phosphate.

It catalyses the reaction L-arginine + H(+) = agmatine + CO2. It functions in the pathway amine and polyamine biosynthesis; agmatine biosynthesis; agmatine from L-arginine: step 1/1. Functionally, catalyzes the biosynthesis of agmatine from arginine. The sequence is that of Biosynthetic arginine decarboxylase from Salmonella dublin (strain CT_02021853).